Reading from the N-terminus, the 449-residue chain is MKKITKFKDQKILVLGLARSGMAAALVLNELGAIVTVNDGKPFEENKEAQVLLEEGIKVITGSHPIDLLDEDFALMVKNPGIRYDNPMVERAEALKIPVITEVELAYLVSEAPIIGITGTNGKTTTTTLIADILNADGQSAKLSGNIGFPASEVAQKAQATDTLVMELSSFQLMGIDTFRPKIALITNLFSAHLDYHGSQEAYEAAKWRIQENMTADDFLILNFNQEKCRKLADKTKATVLAFSTKEKVSGAYVNEGKIYFKDEFIMEASELSLPGDHNLENALAAIVASKLRGAENEAIVEVLTSFAGVKHRLQYLGEIDGRKVYNDSKATNILATQKALSGFDNSKLWLLAGGLDRGNGFEDLEKDLEDLKGMVVFGQTADKLRLMAEKLNIPVFASQNVATALKEIMPQTQVGDTILLSPACASWDQYKTFEERGDLFIEAFESLK.

119-125 serves as a coordination point for ATP; it reads GTNGKTT.

It belongs to the MurCDEF family.

The protein resides in the cytoplasm. It carries out the reaction UDP-N-acetyl-alpha-D-muramoyl-L-alanine + D-glutamate + ATP = UDP-N-acetyl-alpha-D-muramoyl-L-alanyl-D-glutamate + ADP + phosphate + H(+). It functions in the pathway cell wall biogenesis; peptidoglycan biosynthesis. Cell wall formation. Catalyzes the addition of glutamate to the nucleotide precursor UDP-N-acetylmuramoyl-L-alanine (UMA). The sequence is that of UDP-N-acetylmuramoylalanine--D-glutamate ligase from Lactococcus lactis subsp. cremoris (strain MG1363).